Reading from the N-terminus, the 781-residue chain is Death domain-containing protein 1 (781 aa).

2 ZU5 domains span residues 167–301 and 302–483; these read IMEK…VSCL and KKES…VLHL. The Death domain occupies 679-764; that stretch reads DNLLHWLAEE…DLAEELKFKW (86 aa).

The chain is Death domain-containing protein 1 (DTHD1) from Homo sapiens (Human).